A 120-amino-acid polypeptide reads, in one-letter code: Eukaryotic translation initiation factor 4E-binding protein 2 (120 aa).

A phosphothreonine; by MTOR mark is found at T37 and T46. The YXXXXLphi motif signature appears at 54–60 (YDRKFLL). S65 carries the phosphoserine; by MTOR modification. A Phosphothreonine; by MTOR modification is found at T70. S83 carries the post-translational modification Phosphoserine. A deamidated asparagine mark is found at N99 and N102. Positions 116–120 (FEMDI) match the TOS motif motif.

It belongs to the eIF4E-binding protein family. Hypophosphorylated EIF4EBP2 interacts with EIF4E; phosphorylation of EIF4EBP2 by mTORC1 causes dissociation of the complex allowing EIF4G1/EIF4G3 to bind and consequent initiation of translation. Interacts (via TOS motif) with RPTOR; promoting phosphorylation by mTORC1. Interacts with PCMT1; required to prevent isoaspartate accumulation and convert isoaspartate to Asp. Post-translationally, phosphorylation at Thr-37, Thr-46, Ser-65, Thr-70 and Ser-83 is mediated by MTOR and corresponds to the hyperphosphorylated form: it abolishes binding to EIF4E by inducing folding of intrinsically disordered regions. First phosphorylated at Thr-37 and Thr-46 by MTOR, inducing folding of region encompassing residues from Pro-18 to Arg-62 of into a four-stranded beta-domain that sequesters the helical YXXXXLPhi motif into a partly buried beta-strand, blocking accessibility to EIF4E. Protein phosphorylated at Thr-37 and Thr-46 is however unstable and subsequent phosphorylation at Ser-65, Thr-70 and Ser-83 is required to stabilize the fold, decreasing affinity for EIF4E by a factor of 4000. Phosphorylated in response to insulin, EGF and PDGF. In terms of processing, deamidated at Asn-99 and Asn-102 to aspartate (Asp) in brain. Deamidation promotes interaction with RPTOR, subsequent phosphorylation by mTORC1 and increased translation, leading to impair kinetics of excitatory synaptic transmission. Deamidation takes place during postnatal development, when the PI3K-Akt-mTOR signaling is reduced, suggesting it acts as a compensatory mechanism to promote translation despite attenuated PI3K-Akt-mTOR signaling in neuron development. Deamidation converts Asn residues into a mixture of Asp and isoaspartate; interactions with PCMT1 is required to prevent isoaspartate accumulation and convert isoaspartate to Asp. As to expression, enriched in brain.

Its subcellular location is the cytoplasm. The protein resides in the nucleus. Functionally, repressor of translation initiation involved in synaptic plasticity, learning and memory formation. Regulates EIF4E activity by preventing its assembly into the eIF4F complex: hypophosphorylated form of EIF4EBP2 competes with EIF4G1/EIF4G3 and strongly binds to EIF4E, leading to repress translation. In contrast, hyperphosphorylated form dissociates from EIF4E, allowing interaction between EIF4G1/EIF4G3 and EIF4E, leading to initiation of translation. EIF4EBP2 is enriched in brain and acts as a regulator of synapse activity and neuronal stem cell renewal via its ability to repress translation initiation. Mediates the regulation of protein translation by hormones, growth factors and other stimuli that signal through the MAP kinase and mTORC1 pathways. This is Eukaryotic translation initiation factor 4E-binding protein 2 from Mus musculus (Mouse).